A 512-amino-acid polypeptide reads, in one-letter code: Na(+)/H(+) antiporter NhaB (512 aa).

Transmembrane regions (helical) follow at residues Phe-28–Val-48, Ile-52–Ile-72, Leu-97–Phe-117, Phe-144–Ile-164, Leu-201–Pro-221, Phe-237–Phe-257, Leu-296–Ala-330, Thr-347–Ile-367, Leu-390–Val-410, Ala-446–Ile-466, and Val-474–Phe-494.

This sequence belongs to the NhaB Na(+)/H(+) (TC 2.A.34) antiporter family.

Its subcellular location is the cell inner membrane. The catalysed reaction is 2 Na(+)(in) + 3 H(+)(out) = 2 Na(+)(out) + 3 H(+)(in). Functionally, na(+)/H(+) antiporter that extrudes sodium in exchange for external protons. The chain is Na(+)/H(+) antiporter NhaB from Enterobacter sp. (strain 638).